Consider the following 68-residue polypeptide: Small ribosomal subunit protein bS21 (68 aa).

This sequence belongs to the bacterial ribosomal protein bS21 family.

In Cereibacter sphaeroides (strain ATCC 17029 / ATH 2.4.9) (Rhodobacter sphaeroides), this protein is Small ribosomal subunit protein bS21.